A 238-amino-acid polypeptide reads, in one-letter code: Probable transcriptional regulatory protein CT_457 (238 aa).

The segment at 1-21 is disordered; that stretch reads MAGHSKWANTKHRKERADHKK. Over residues 9–21 the composition is skewed to basic residues; that stretch reads NTKHRKERADHKK.

This sequence belongs to the TACO1 family.

It is found in the cytoplasm. This is Probable transcriptional regulatory protein CT_457 from Chlamydia trachomatis serovar D (strain ATCC VR-885 / DSM 19411 / UW-3/Cx).